The following is a 458-amino-acid chain: GTPase Der (458 aa).

2 EngA-type G domains span residues 4–169 (PSIA…PKDL) and 178–353 (IMMS…TQHR). GTP contacts are provided by residues 10–17 (GRPNVGKS), 57–61 (DTGGL), 120–123 (NKCE), 184–191 (GRPNVGKS), 231–235 (DTAGI), and 296–299 (NKWD). The KH-like domain maps to 354 to 439 (RRVTTSVVNE…PIILLWRGKQ (86 aa)).

It belongs to the TRAFAC class TrmE-Era-EngA-EngB-Septin-like GTPase superfamily. EngA (Der) GTPase family. In terms of assembly, associates with the 50S ribosomal subunit.

In terms of biological role, GTPase that plays an essential role in the late steps of ribosome biogenesis. The protein is GTPase Der of Prochlorococcus marinus subsp. pastoris (strain CCMP1986 / NIES-2087 / MED4).